A 436-amino-acid polypeptide reads, in one-letter code: Glutamyl-tRNA reductase (436 aa).

Substrate is bound by residues 56–59 (TCNR), S114, 119–121 (EAQ), and Q125. C57 serves as the catalytic Nucleophile. NADP(+) is bound at residue 194–199 (GAGEMI).

It belongs to the glutamyl-tRNA reductase family. In terms of assembly, homodimer.

The enzyme catalyses (S)-4-amino-5-oxopentanoate + tRNA(Glu) + NADP(+) = L-glutamyl-tRNA(Glu) + NADPH + H(+). It functions in the pathway porphyrin-containing compound metabolism; protoporphyrin-IX biosynthesis; 5-aminolevulinate from L-glutamyl-tRNA(Glu): step 1/2. Its function is as follows. Catalyzes the NADPH-dependent reduction of glutamyl-tRNA(Glu) to glutamate 1-semialdehyde (GSA). This chain is Glutamyl-tRNA reductase, found in Acidovorax sp. (strain JS42).